The sequence spans 130 residues: SGSCTVRTCWRQLAPFTEMGRSLKQRYDVAVKVLSMTNEAAGERTIARSRRRPREQRGQRRPKVSDGALTPRGIDLVYVEDSPSYCRASRYSPGTANRSCQKGRNCDSICCGRGYNTRVSSVQKPCQCQV.

S1 carries the O-palmitoleoyl serine; by PORCN lipid modification. Positions 41 to 69 (AGERTIARSRRRPREQRGQRRPKVSDGAL) are disordered. A compositionally biased stretch (basic residues) spans 47–62 (ARSRRRPREQRGQRRP). A glycan (N-linked (GlcNAc...) asparagine) is linked at N97. C100 and C111 are oxidised to a cystine.

Belongs to the Wnt family. Palmitoleoylation is required for efficient binding to frizzled receptors. Depalmitoleoylation leads to Wnt signaling pathway inhibition.

The protein localises to the secreted. Its subcellular location is the extracellular space. It localises to the extracellular matrix. Ligand for members of the frizzled family of seven transmembrane receptors. Probable developmental protein. May be a signaling molecule which affects the development of discrete regions of tissues. Is likely to signal over only few cell diameters. In Eptatretus stoutii (Pacific hagfish), this protein is Protein Wnt-9 (WNT-9).